A 617-amino-acid chain; its full sequence is BTB/POZ domain-containing protein At3g08570 (617 aa).

The BTB domain occupies 36 to 106 (GDITIVVDGE…CYGINFEITI (71 aa)). One can recognise an NPH3 domain in the interval 210–490 (EWWIEDLSAL…VRVLYSEQLR (281 aa)). Tyrosine 431 is subject to Phosphotyrosine. 2 disordered regions span residues 505–525 (LSSQ…RDTY) and 585–617 (GGGP…ESMF). Positions 602–617 (SRLERKTVRSRPESMF) are enriched in basic and acidic residues.

The protein belongs to the NPH3 family.

It participates in protein modification; protein ubiquitination. Functionally, may act as a substrate-specific adapter of an E3 ubiquitin-protein ligase complex (CUL3-RBX1-BTB) which mediates the ubiquitination and subsequent proteasomal degradation of target proteins. In Arabidopsis thaliana (Mouse-ear cress), this protein is BTB/POZ domain-containing protein At3g08570.